The primary structure comprises 477 residues: Methylenetetrahydrofolate--tRNA-(uracil-5-)-methyltransferase TrmFO (477 aa).

15–20 (GAGLAG) lines the FAD pocket.

This sequence belongs to the MnmG family. TrmFO subfamily. Requires FAD as cofactor.

It localises to the cytoplasm. It catalyses the reaction uridine(54) in tRNA + (6R)-5,10-methylene-5,6,7,8-tetrahydrofolate + NADH + H(+) = 5-methyluridine(54) in tRNA + (6S)-5,6,7,8-tetrahydrofolate + NAD(+). It carries out the reaction uridine(54) in tRNA + (6R)-5,10-methylene-5,6,7,8-tetrahydrofolate + NADPH + H(+) = 5-methyluridine(54) in tRNA + (6S)-5,6,7,8-tetrahydrofolate + NADP(+). Its function is as follows. Catalyzes the folate-dependent formation of 5-methyl-uridine at position 54 (M-5-U54) in all tRNAs. This is Methylenetetrahydrofolate--tRNA-(uracil-5-)-methyltransferase TrmFO from Nitrobacter hamburgensis (strain DSM 10229 / NCIMB 13809 / X14).